The sequence spans 387 residues: GDP-mannose transporter (387 aa).

Residues 1–25 are compositionally biased toward basic and acidic residues; sequence MADTKKNDNYAIDMDKLDAESDRFR. At 1-42 the chain is on the cytoplasmic side; the sequence is MADTKKNDNYAIDMDKLDAESDRFRPPPQPQPRHSSSSHSQS. The tract at residues 1–45 is disordered; the sequence is MADTKKNDNYAIDMDKLDAESDRFRPPPQPQPRHSSSSHSQSISN. Residues 32-45 are compositionally biased toward low complexity; the sequence is PRHSSSSHSQSISN. A helical transmembrane segment spans residues 43 to 63; it reads ISNSPVLPILSYCASSILMTV. Residues 64-71 lie on the Lumenal side of the membrane; sequence TNKYVLSG. A helical membrane pass occupies residues 72 to 92; that stretch reads VQFNLNFFLLCVQSVVCIIAI. Topologically, residues 93–112 are cytoplasmic; it reads QTCKSMGLINYRDFNSDEAK. Residues 113 to 129 form a helical membrane-spanning segment; it reads KWFPISLLLIGMIYTGT. Residues 130–136 lie on the Lumenal side of the membrane; it reads KALKFLS. Residues 137-153 traverse the membrane as a helical segment; sequence IPVYTIFKNLTIILIAY. Residues 154-162 lie on the Cytoplasmic side of the membrane; sequence GEVLWFGGS. Residues 163-184 form a helical membrane-spanning segment; it reads VTGMALFSFGLMVLSSVIAAWA. Residues 185–206 are Lumenal-facing; it reads DIKHALDTSGFSGAEATSKIST. A helical transmembrane segment spans residues 207 to 227; that stretch reads LNAGYIWMLINCLCTSTYILG. Residues 228-241 are Cytoplasmic-facing; it reads MRKRIKLTNFKDFD. The helical transmembrane segment at 242 to 262 threads the bilayer; it reads TMFYNNLLSIPILMIGSFIVE. Residues 263 to 280 lie on the Lumenal side of the membrane; sequence DWSSENINKNFPIETRNS. The chain crosses the membrane as a helical span at residues 281–301; that stretch reads LIFAMIFSGLSSVFISYTSAW. The Cytoplasmic portion of the chain corresponds to 302–309; it reads CVRVTSST. A helical membrane pass occupies residues 310–329; sequence TYSMVGALNKLPIALSGLIF. The Lumenal segment spans residues 330–332; it reads FGD. The helical transmembrane segment at 333 to 355 threads the bilayer; sequence PVTVPSVSAIVVGFISGIVYSLA. Residues 356-387 lie on the Cytoplasmic side of the membrane; sequence KVKQNAKPRTGVLPTTNPVSASTQSMRDGLKS. A disordered region spans residues 366–387; sequence GVLPTTNPVSASTQSMRDGLKS. The span at 368–381 shows a compositional bias: polar residues; the sequence is LPTTNPVSASTQSM.

The protein belongs to the TPT transporter family. SLC35D subfamily. Homooligomer.

The protein resides in the golgi apparatus membrane. It localises to the cytoplasmic vesicle membrane. The protein localises to the endoplasmic reticulum membrane. Functionally, involved in the import of GDP-mannose from the cytoplasm into the Golgi lumen. This chain is GDP-mannose transporter (VRG4), found in Coccidioides immitis (strain RS) (Valley fever fungus).